The sequence spans 194 residues: dTTP/UTP pyrophosphatase (194 aa).

The Proton acceptor role is filled by Asp68.

This sequence belongs to the Maf family. YhdE subfamily. The cofactor is a divalent metal cation.

Its subcellular location is the cytoplasm. It catalyses the reaction dTTP + H2O = dTMP + diphosphate + H(+). It carries out the reaction UTP + H2O = UMP + diphosphate + H(+). Its function is as follows. Nucleoside triphosphate pyrophosphatase that hydrolyzes dTTP and UTP. May have a dual role in cell division arrest and in preventing the incorporation of modified nucleotides into cellular nucleic acids. This Clostridioides difficile (strain 630) (Peptoclostridium difficile) protein is dTTP/UTP pyrophosphatase.